Reading from the N-terminus, the 704-residue chain is DNA ligase (704 aa).

Residues aspartate 43–aspartate 47, serine 92–leucine 93, and glutamate 124 contribute to the NAD(+) site. The N6-AMP-lysine intermediate role is filled by lysine 126. NAD(+)-binding residues include arginine 147, glutamate 182, lysine 298, and lysine 322. Residues cysteine 427, cysteine 430, cysteine 445, and cysteine 451 each coordinate Zn(2+). Residues proline 625 to alanine 704 form the BRCT domain.

This sequence belongs to the NAD-dependent DNA ligase family. LigA subfamily. Requires Mg(2+) as cofactor. It depends on Mn(2+) as a cofactor.

It catalyses the reaction NAD(+) + (deoxyribonucleotide)n-3'-hydroxyl + 5'-phospho-(deoxyribonucleotide)m = (deoxyribonucleotide)n+m + AMP + beta-nicotinamide D-nucleotide.. In terms of biological role, DNA ligase that catalyzes the formation of phosphodiester linkages between 5'-phosphoryl and 3'-hydroxyl groups in double-stranded DNA using NAD as a coenzyme and as the energy source for the reaction. It is essential for DNA replication and repair of damaged DNA. This Cereibacter sphaeroides (strain ATCC 17029 / ATH 2.4.9) (Rhodobacter sphaeroides) protein is DNA ligase.